The primary structure comprises 372 residues: Queuine tRNA-ribosyltransferase (372 aa).

The active-site Proton acceptor is Asp92. Residues 92–96 (DSGGY), Asp146, Gln188, and Gly215 contribute to the substrate site. The interval 246 to 252 (GIGSLRE) is RNA binding. The active-site Nucleophile is Asp265. The segment at 270 to 274 (TRLGR) is RNA binding; important for wobble base 34 recognition. The Zn(2+) site is built by Cys303, Cys305, Cys308, and His334.

This sequence belongs to the queuine tRNA-ribosyltransferase family. In terms of assembly, homodimer. Within each dimer, one monomer is responsible for RNA recognition and catalysis, while the other monomer binds to the replacement base PreQ1. The cofactor is Zn(2+).

It carries out the reaction 7-aminomethyl-7-carbaguanine + guanosine(34) in tRNA = 7-aminomethyl-7-carbaguanosine(34) in tRNA + guanine. It participates in tRNA modification; tRNA-queuosine biosynthesis. Its function is as follows. Catalyzes the base-exchange of a guanine (G) residue with the queuine precursor 7-aminomethyl-7-deazaguanine (PreQ1) at position 34 (anticodon wobble position) in tRNAs with GU(N) anticodons (tRNA-Asp, -Asn, -His and -Tyr). Catalysis occurs through a double-displacement mechanism. The nucleophile active site attacks the C1' of nucleotide 34 to detach the guanine base from the RNA, forming a covalent enzyme-RNA intermediate. The proton acceptor active site deprotonates the incoming PreQ1, allowing a nucleophilic attack on the C1' of the ribose to form the product. After dissociation, two additional enzymatic reactions on the tRNA convert PreQ1 to queuine (Q), resulting in the hypermodified nucleoside queuosine (7-(((4,5-cis-dihydroxy-2-cyclopenten-1-yl)amino)methyl)-7-deazaguanosine). The polypeptide is Queuine tRNA-ribosyltransferase (Prochlorococcus marinus subsp. pastoris (strain CCMP1986 / NIES-2087 / MED4)).